Here is a 302-residue protein sequence, read N- to C-terminus: Nuclear egress protein 1 (302 aa).

The span at 1-17 (MPKSVSSHISLATSTGR) shows a compositional bias: polar residues. The interval 1–22 (MPKSVSSHISLATSTGRSGPRD) is disordered. The CCCH-type zinc finger occupies 102–227 (CVSLSPFGHS…CILFKTRALH (126 aa)).

The protein belongs to the herpesviridae NEC1 protein family. As to quaternary structure, forms a heterohexameric complex with NEC2. Interacts with capsid vertex specific component 2/CVC2; this interaction directs the capsid to the host inner nuclear membrane to initiate budding. In terms of processing, phosphorylated at serine residues in the N-terminus. This phosphorylation regulates the localization within the inner nuclear membrane.

Its subcellular location is the host nucleus inner membrane. In terms of biological role, plays an essential role in virion nuclear egress, the first step of virion release from infected cell. Within the host nucleus, NEC1 interacts with the newly formed capsid through the vertexes and directs it to the inner nuclear membrane by associating with NEC2. Induces the budding of the capsid at the inner nuclear membrane as well as its envelopment into the perinuclear space. There, the NEC1/NEC2 complex promotes the fusion of the enveloped capsid with the outer nuclear membrane and the subsequent release of the viral capsid into the cytoplasm where it will reach the secondary budding sites in the host Golgi or trans-Golgi network. The polypeptide is Nuclear egress protein 1 (Homo sapiens (Human)).